The primary structure comprises 296 residues: Tubulin polyglutamylase complex subunit 2 (296 aa).

Positions 254–265 (SKNKILIPKKKG) are enriched in basic residues. Positions 254 to 296 (SKNKILIPKKKGPVPPASGQKGPGPLPPPTSKPTTGSGNPVRK) are disordered. A compositionally biased stretch (low complexity) spans 285 to 296 (KPTTGSGNPVRK).

Part of the neuronal tubulin polyglutamylase complex which contains TPGS1, TPGS2, TTLL1, LRRC49 and NICN1. Interacts with CSTPP1 and LRRC49.

It localises to the cytoplasm. The protein resides in the cytoskeleton. Its subcellular location is the microtubule organizing center. The protein localises to the centrosome. It is found in the centriolar satellite. Subunit of the tubulin polyglutamylase complex (TPGC). The complex mediates cilia and flagella polyglutamylation which is essential for their biogenesis and motility. The sequence is that of Tubulin polyglutamylase complex subunit 2 (Tpgs2) from Mus musculus (Mouse).